Reading from the N-terminus, the 251-residue chain is Probable inactive cytidine deaminase 4 (251 aa).

Position 61 to 63 (61 to 63 (NVE)) interacts with substrate. Glu-76 acts as the Proton donor in catalysis. A CMP/dCMP-type deaminase domain is found at 136–251 (EHCSHLKCRA…VFRCHKTAEN (116 aa)).

It belongs to the cytidine and deoxycytidylate deaminase family. Homodimer.

The chain is Probable inactive cytidine deaminase 4 (CDA4) from Arabidopsis thaliana (Mouse-ear cress).